The chain runs to 201 residues: Dephospho-CoA kinase (201 aa).

The 198-residue stretch at 4-201 folds into the DPCK domain; the sequence is AFFVTASIAC…VIQEISKGNM (198 aa). 12 to 17 is a binding site for ATP; the sequence is ACGKST.

Belongs to the CoaE family.

Its subcellular location is the cytoplasm. The catalysed reaction is 3'-dephospho-CoA + ATP = ADP + CoA + H(+). Its pathway is cofactor biosynthesis; coenzyme A biosynthesis; CoA from (R)-pantothenate: step 5/5. Functionally, catalyzes the phosphorylation of the 3'-hydroxyl group of dephosphocoenzyme A to form coenzyme A. In Campylobacter jejuni subsp. jejuni serotype O:2 (strain ATCC 700819 / NCTC 11168), this protein is Dephospho-CoA kinase.